A 363-amino-acid polypeptide reads, in one-letter code: S-adenosylmethionine:tRNA ribosyltransferase-isomerase (363 aa).

Belongs to the QueA family. Monomer.

Its subcellular location is the cytoplasm. It catalyses the reaction 7-aminomethyl-7-carbaguanosine(34) in tRNA + S-adenosyl-L-methionine = epoxyqueuosine(34) in tRNA + adenine + L-methionine + 2 H(+). It functions in the pathway tRNA modification; tRNA-queuosine biosynthesis. Its function is as follows. Transfers and isomerizes the ribose moiety from AdoMet to the 7-aminomethyl group of 7-deazaguanine (preQ1-tRNA) to give epoxyqueuosine (oQ-tRNA). This Haemophilus influenzae (strain ATCC 51907 / DSM 11121 / KW20 / Rd) protein is S-adenosylmethionine:tRNA ribosyltransferase-isomerase.